Reading from the N-terminus, the 68-residue chain is DNA-directed RNA polymerase subunit omega (68 aa).

This sequence belongs to the RNA polymerase subunit omega family. In terms of assembly, the RNAP catalytic core consists of 2 alpha, 1 beta, 1 beta' and 1 omega subunit. When a sigma factor is associated with the core the holoenzyme is formed, which can initiate transcription.

It carries out the reaction RNA(n) + a ribonucleoside 5'-triphosphate = RNA(n+1) + diphosphate. Promotes RNA polymerase assembly. Latches the N- and C-terminal regions of the beta' subunit thereby facilitating its interaction with the beta and alpha subunits. This chain is DNA-directed RNA polymerase subunit omega, found in Ruminiclostridium cellulolyticum (strain ATCC 35319 / DSM 5812 / JCM 6584 / H10) (Clostridium cellulolyticum).